We begin with the raw amino-acid sequence, 98 residues long: NADH-ubiquinone oxidoreductase chain 4L (98 aa).

The next 3 helical transmembrane spans lie at 1–21 (MSLT…GLLM), 29–49 (SLLC…ITIL), and 61–81 (IILL…LVMV).

The protein belongs to the complex I subunit 4L family. Core subunit of respiratory chain NADH dehydrogenase (Complex I) which is composed of 45 different subunits.

The protein resides in the mitochondrion inner membrane. The enzyme catalyses a ubiquinone + NADH + 5 H(+)(in) = a ubiquinol + NAD(+) + 4 H(+)(out). Functionally, core subunit of the mitochondrial membrane respiratory chain NADH dehydrogenase (Complex I) which catalyzes electron transfer from NADH through the respiratory chain, using ubiquinone as an electron acceptor. Part of the enzyme membrane arm which is embedded in the lipid bilayer and involved in proton translocation. In Ectophylla alba (White bat), this protein is NADH-ubiquinone oxidoreductase chain 4L (MT-ND4L).